Consider the following 97-residue polypeptide: Citrate lyase acyl carrier protein (97 aa).

Position 14 is an O-(phosphoribosyl dephospho-coenzyme A)serine (S14).

This sequence belongs to the CitD family. As to quaternary structure, oligomer with a subunit composition of (alpha,beta,gamma)6.

The protein localises to the cytoplasm. Functionally, covalent carrier of the coenzyme of citrate lyase. The polypeptide is Citrate lyase acyl carrier protein (Yersinia enterocolitica serotype O:8 / biotype 1B (strain NCTC 13174 / 8081)).